The chain runs to 243 residues: Uridylate kinase (243 aa).

Residue 18–21 (KLGG) coordinates ATP. Residue Gly59 coordinates UMP. 2 residues coordinate ATP: Gly60 and Arg64. Residues Asp79 and 140–147 (MGMPYFST) contribute to the UMP site. Residues Tyr173 and Asp176 each coordinate ATP.

It belongs to the UMP kinase family. Homohexamer.

It localises to the cytoplasm. The catalysed reaction is UMP + ATP = UDP + ADP. Its pathway is pyrimidine metabolism; CTP biosynthesis via de novo pathway; UDP from UMP (UMPK route): step 1/1. With respect to regulation, inhibited by UTP. Catalyzes the reversible phosphorylation of UMP to UDP. This Corynebacterium efficiens (strain DSM 44549 / YS-314 / AJ 12310 / JCM 11189 / NBRC 100395) protein is Uridylate kinase.